Here is a 337-residue protein sequence, read N- to C-terminus: Glyceraldehyde-3-phosphate dehydrogenase (337 aa).

NAD(+)-binding positions include 12-13 (RI), D34, and R79. D-glyceraldehyde 3-phosphate-binding positions include 150 to 152 (SCT), T181, 210 to 211 (TG), and R233. C151 serves as the catalytic Nucleophile. N315 serves as a coordination point for NAD(+).

This sequence belongs to the glyceraldehyde-3-phosphate dehydrogenase family. In terms of assembly, homotetramer.

It is found in the cytoplasm. The enzyme catalyses D-glyceraldehyde 3-phosphate + phosphate + NAD(+) = (2R)-3-phospho-glyceroyl phosphate + NADH + H(+). Its pathway is carbohydrate degradation; glycolysis; pyruvate from D-glyceraldehyde 3-phosphate: step 1/5. This chain is Glyceraldehyde-3-phosphate dehydrogenase (GPD), found in Coccidioides posadasii (strain C735) (Valley fever fungus).